Reading from the N-terminus, the 192-residue chain is uncharacterized protein (192 aa).

Residues 53–111 (CLKESVERARKVYLSLLKDYERKSREYEKAYENYLKELRTYRETLYRIKEDLKFYERIC) adopt a coiled-coil conformation.

This is an uncharacterized protein from Aquifex aeolicus (strain VF5).